The primary structure comprises 140 residues: ATP synthase epsilon chain (140 aa).

This sequence belongs to the ATPase epsilon chain family. In terms of assembly, F-type ATPases have 2 components, CF(1) - the catalytic core - and CF(0) - the membrane proton channel. CF(1) has five subunits: alpha(3), beta(3), gamma(1), delta(1), epsilon(1). CF(0) has three main subunits: a, b and c.

It localises to the cell inner membrane. Its function is as follows. Produces ATP from ADP in the presence of a proton gradient across the membrane. The protein is ATP synthase epsilon chain of Herminiimonas arsenicoxydans.